Reading from the N-terminus, the 115-residue chain is Kunitz-type trypsin inhibitor 1 (115 aa).

It belongs to the protease inhibitor I3 (leguminous Kunitz-type inhibitor) family.

In terms of biological role, exhibits Kunitz trypsin protease inhibitor activity. The chain is Kunitz-type trypsin inhibitor 1 from Selenicereus undatus (Pitahaya).